Consider the following 556-residue polypeptide: Phosphoacetylglucosamine mutase (556 aa).

Ser-68 serves as the catalytic Phosphoserine intermediate. Mg(2+) contacts are provided by Ser-68, Asp-286, Asp-288, and Asp-290. Ser-68 carries the phosphoserine modification. Residues 386 to 388 (EAN), 518 to 522 (RPSGT), and Arg-527 each bind substrate.

Belongs to the phosphohexose mutase family. Mg(2+) serves as cofactor.

The enzyme catalyses N-acetyl-alpha-D-glucosamine 1-phosphate = N-acetyl-D-glucosamine 6-phosphate. Its pathway is nucleotide-sugar biosynthesis; UDP-N-acetyl-alpha-D-glucosamine biosynthesis; N-acetyl-alpha-D-glucosamine 1-phosphate from alpha-D-glucosamine 6-phosphate (route I): step 2/2. Interconverts GlcNAc-6-P and GlcNAc-1-P. The protein is Phosphoacetylglucosamine mutase (DRT101) of Arabidopsis thaliana (Mouse-ear cress).